The following is a 612-amino-acid chain: Peroxisomal carnitine O-octanoyltransferase (612 aa).

M1 carries the N-acetylmethionine modification. K40 and K57 each carry N6-succinyllysine. Residue H327 is the Proton acceptor of the active site. Residues K406 and 410 to 417 contribute to the CoA site; that span reads KNKMLHPD. K406 is modified (N6-acetyllysine; alternate). K406 is modified (N6-succinyllysine; alternate). Y439, T441, and T452 together coordinate (R)-carnitine. Positions 610–612 match the Microbody targeting signal motif; it reads THL.

It belongs to the carnitine/choline acetyltransferase family. Monomer.

It is found in the peroxisome. It catalyses the reaction octanoyl-CoA + (R)-carnitine = O-octanoyl-(R)-carnitine + CoA. The catalysed reaction is 4,8-dimethylnonanoyl-CoA + (R)-carnitine = O-4,8-dimethylnonanoyl-(R)-carnitine + CoA. It participates in lipid metabolism; fatty acid beta-oxidation. In terms of biological role, beta-oxidation of fatty acids. The highest activity concerns the C6 to C10 chain length substrate. Converts the end product of pristanic acid beta oxidation, 4,8-dimethylnonanoyl-CoA, to its corresponding carnitine ester. The polypeptide is Peroxisomal carnitine O-octanoyltransferase (CROT) (Homo sapiens (Human)).